We begin with the raw amino-acid sequence, 161 residues long: Transcriptional repressor NrdR (161 aa).

Residues 1–11 (MRCPSCNSLDT) are compositionally biased toward polar residues. The segment at 1–20 (MRCPSCNSLDTQVKDSRPTE) is disordered. The segment at 3–34 (CPSCNSLDTQVKDSRPTEDSSVIRRRRVCVTC) is a zinc-finger region. The 91-residue stretch at 49-139 (LTVIKRNGRR…VYRNFREAKD (91 aa)) folds into the ATP-cone domain.

Belongs to the NrdR family. Zn(2+) serves as cofactor.

Functionally, negatively regulates transcription of bacterial ribonucleotide reductase nrd genes and operons by binding to NrdR-boxes. The polypeptide is Transcriptional repressor NrdR (Bradyrhizobium sp. (strain ORS 278)).